The chain runs to 122 residues: Large ribosomal subunit protein eL31 (122 aa).

The protein belongs to the eukaryotic ribosomal protein eL31 family.

The protein is Large ribosomal subunit protein eL31 of Caenorhabditis elegans.